The chain runs to 512 residues: Tyrosine-protein kinase Lyn (512 aa).

The tract at residues 1–50 (MGCIKSKRKDNLNDDGVDMKTQPVRNTDRTIYVRDPTSNKQQRPVPESQL) is disordered. Gly2 carries the N-myristoyl glycine lipid modification. The S-palmitoyl cysteine moiety is linked to residue Cys3. The region spanning 63–123 (EQGDIVVALY…PSNYVAKVNT (61 aa)) is the SH3 domain. One can recognise an SH2 domain in the interval 129–226 (WFFKDITRKD…GLCRRLEKAC (98 aa)). Tyr193 carries the phosphotyrosine modification. Residue Ser228 is modified to Phosphoserine. The 255-residue stretch at 247 to 501 (IKLVKKLGAG…YLQSVLDDFY (255 aa)) folds into the Protein kinase domain. ATP contacts are provided by residues 253-261 (LGAGQFGEV) and Lys275. A phosphotyrosine mark is found at Tyr306 and Tyr316. Asp367 (proton acceptor) is an active-site residue. Tyr397 is subject to Phosphotyrosine; by autocatalysis. A phosphotyrosine mark is found at Tyr460 and Tyr473. Tyr508 carries the phosphotyrosine; by autocatalysis, CSK and MATK modification.

It belongs to the protein kinase superfamily. Tyr protein kinase family. SRC subfamily. Interacts with TEC. Interacts (via SH2 domain) with FLT3 (tyrosine phosphorylated). Interacts with LIME1 and with CD79A upon activation of the B-cell antigen receptor. Interacts with the B-cell receptor complex. Interacts with phosphorylated THEMIS2. Interacts with EPOR. Interacts with MS4A2/FCER1B. Interaction (via the SH2 and SH3 domains) with MUC1 is stimulated by IL7 and the subsequent phosphorylation increases the binding between MUC1 and CTNNB1/beta-catenin. Interacts with ADAM15. Interacts with NDFIP2 and more weakly with NDFIP1. Interacts with FASLG. Interacts with KIT. Interacts with HCLS1. Interacts with FCGR2B. Interacts with FCGR1A; the interaction may be indirect. Interacts with CD19, CD22, CD79A and CD79B. Interacts (via SH3 domain) with CBLC, PPP1R15A and PDE4A. Interacts with TGFB1I1. Interacts (via SH3 domain) with PIK3R1, the regulatory subunit of phosphatidylinositol 3-kinase; this interaction enhances phosphatidylinositol 3-kinase activity. Interacts with CSF2RB, the common subunit of the IL3, IL5 and CSF2 receptors. Interacts with PAG1; identified in a complex with PAG1 and STAT3. Interacts with ABL1. Interacts with PTPN6/SHP-1. Interacts (via SH3 domain) with SCIMP (via proline-rich region). This interaction facilitates the phosphorylation of SCIMP 'Tyr-96', which enhances binding of SCIMP to TLR4, and consequently the phosphorylation of TLR4 in response to stimulation by lipopolysaccharide in macrophages. Interacts with LPXN (via LD motif 3) and the interaction is induced upon B-cell antigen receptor (BCR) activation. Interacts (via SH3-domain) with ANKRD54 (via ankyrin repeat region) in an activation-independent status of LYN. Forms a multiprotein complex with ANKRD54 and HCLS1. Interacts (via SH2 and SH3 domains) with UNC119; leading to LYN activation. Interacts with CD36. Interacts with LYN. Interacts with SKAP1 and FYB1; this interaction promotes the phosphorylation of CLNK. Interacts with BCAR1/CAS and NEDD9/HEF1. Ubiquitinated. Ubiquitination is SH3-dependent. In terms of processing, autophosphorylated. Phosphorylated on tyrosine residues in response to KIT signaling. Phosphorylation at Tyr-397 is required for optimal activity. Phosphorylation at Tyr-508 inhibits kinase activity. Phosphorylated at Tyr-508 by CSK. Dephosphorylated by PTPRC/CD45. Becomes rapidly phosphorylated upon activation of the B-cell receptor and the immunoglobulin receptor FCGR1A. Phosphorylated in response to integrin ITGB1 in B-cells. As to expression, detected in spleen (at protein level). Expressed predominantly in B-lymphoid and myeloid cells.

Its subcellular location is the cell membrane. The protein resides in the nucleus. It is found in the cytoplasm. The protein localises to the perinuclear region. It localises to the golgi apparatus. Its subcellular location is the membrane. The enzyme catalyses L-tyrosyl-[protein] + ATP = O-phospho-L-tyrosyl-[protein] + ADP + H(+). With respect to regulation, subject to autoinhibition, mediated by intramolecular interactions between the SH2 domain and the C-terminal phosphotyrosine. Phosphorylation at Tyr-397 is required for optimal activity. Phosphorylated by CSK at Tyr-508; phosphorylation at Tyr-508 inhibits kinase activity. Kinase activity is modulated by dephosphorylation by PTPRC/CD45. Non-receptor tyrosine-protein kinase that transmits signals from cell surface receptors and plays an important role in the regulation of innate and adaptive immune responses, hematopoiesis, responses to growth factors and cytokines, integrin signaling, but also responses to DNA damage and genotoxic agents. Functions primarily as negative regulator, but can also function as activator, depending on the context. Required for the initiation of the B-cell response, but also for its down-regulation and termination. Plays an important role in the regulation of B-cell differentiation, proliferation, survival and apoptosis, and is important for immune self-tolerance. Acts downstream of several immune receptors, including the B-cell receptor, CD79A, CD79B, CD5, CD19, CD22, FCER1, FCGR2, FCGR1A, TLR2 and TLR4. Plays a role in the inflammatory response to bacterial lipopolysaccharide. Mediates the responses to cytokines and growth factors in hematopoietic progenitors, platelets, erythrocytes, and in mature myeloid cells, such as dendritic cells, neutrophils and eosinophils. Acts downstream of EPOR, KIT, MPL, the chemokine receptor CXCR4, as well as the receptors for IL3, IL5 and CSF2. Plays an important role in integrin signaling. Regulates cell proliferation, survival, differentiation, migration, adhesion, degranulation, and cytokine release. Involved in the regulation of endothelial activation, neutrophil adhesion and transendothelial migration. Down-regulates signaling pathways by phosphorylation of immunoreceptor tyrosine-based inhibitory motifs (ITIM), that then serve as binding sites for phosphatases, such as PTPN6/SHP-1, PTPN11/SHP-2 and INPP5D/SHIP-1, that modulate signaling by dephosphorylation of kinases and their substrates. Phosphorylates LIME1 in response to CD22 activation. Phosphorylates BTK, CBL, CD5, CD19, CD72, CD79A, CD79B, CSF2RB, DOK1, HCLS1, LILRB3/PIR-B, MS4A2/FCER1B, SYK and TEC. Promotes phosphorylation of SIRPA, PTPN6/SHP-1, PTPN11/SHP-2 and INPP5D/SHIP-1. Required for rapid phosphorylation of FER in response to FCER1 activation. Mediates KIT phosphorylation. Acts as an effector of EPOR (erythropoietin receptor) in controlling KIT expression and may play a role in erythroid differentiation during the switch between proliferation and maturation. Depending on the context, activates or inhibits several signaling cascades. Regulates phosphatidylinositol 3-kinase activity and AKT1 activation. Regulates activation of the MAP kinase signaling cascade, including activation of MAP2K1/MEK1, MAPK1/ERK2, MAPK3/ERK1, MAPK8/JNK1 and MAPK9/JNK2. Mediates activation of STAT5A and/or STAT5B. Phosphorylates LPXN on 'Tyr-72'. Kinase activity facilitates TLR4-TLR6 heterodimerization and signal initiation. Phosphorylates SCIMP on 'Tyr-96'; this enhances binding of SCIMP to TLR4, promoting the phosphorylation of TLR4, and a selective cytokine response to lipopolysaccharide in macrophages. Phosphorylates CLNK. Phosphorylates BCAR1/CAS and NEDD9/HEF1. The polypeptide is Tyrosine-protein kinase Lyn (Lyn) (Rattus norvegicus (Rat)).